Reading from the N-terminus, the 595-residue chain is GRB2-associated-binding protein 3 (595 aa).

Residues 5-117 (DTVCMGWLIK…WVHSISQVCN (113 aa)) form the PH domain. The interval 295–339 (SGVKELNIMSNTPPPRPPKPSYLSEQRQDQPLLTGHSSNKKPGYT) is disordered. The span at 317–331 (LSEQRQDQPLLTGHS) shows a compositional bias: polar residues. Ser-346 carries the post-translational modification Phosphoserine. Disordered regions lie at residues 389 to 408 (PSAE…SELR) and 418 to 463 (PMSS…QEHT). The segment covering 454-463 (RNLSTIQEHT) has biased composition (polar residues). Ser-480 is subject to Phosphoserine. A disordered region spans residues 493 to 513 (STPSEEEEEEEEEEEEEEEEE). A compositionally biased stretch (acidic residues) spans 496 to 513 (SEEEEEEEEEEEEEEEEE).

The protein belongs to the GAB family. As to quaternary structure, interacts with PIK3R/p85, SHP2 and GRAP2/MONA. May interact with Grb2. Phosphorylated on tyrosine residue(s) after macrophage colony-stimulating factor (M-CSF) receptor stimulation. Highly expressed in spleen and thymus and weakly in brain, heart, lung, kidney, uterus, and embryonic stem cells. Also expressed in myeloid and macrophage cell lines.

This Mus musculus (Mouse) protein is GRB2-associated-binding protein 3 (Gab3).